A 207-amino-acid polypeptide reads, in one-letter code: N-(5'-phosphoribosyl)anthranilate isomerase (207 aa).

Belongs to the TrpF family.

It carries out the reaction N-(5-phospho-beta-D-ribosyl)anthranilate = 1-(2-carboxyphenylamino)-1-deoxy-D-ribulose 5-phosphate. The protein operates within amino-acid biosynthesis; L-tryptophan biosynthesis; L-tryptophan from chorismate: step 3/5. The protein is N-(5'-phosphoribosyl)anthranilate isomerase of Stutzerimonas stutzeri (strain A1501) (Pseudomonas stutzeri).